The sequence spans 475 residues: MSATAAARKRGKPASGAGAGAGAGKRRRKADSAGDRGKSKGGGKMNEEISSDSESESLAPRKPEEEEEEELEETAQEKKLRLAKLYLEQLRQQEEEKAEARAFEEDQVAGRLKEDVLEQRGRLQKLVAKEIQAPASADIRVLRGHQLSITCLVVTPDDSAIFSAAKDCSIIKWSVESGRKLHVIPRAKKGAEGKPPGHSSHVLCMAISSDGKYLASGDRSKLILIWEAQSCQHLYTFTGHRDAVSGLAFRRGTHQLYSTSHDRSVKVWNVAENSYVETLFGHQDAVAALDALSRECCVTAGGRDGTVRVWKIPEESQLVFYGHQGSIDCIHLINEEHMVSGADDGSVALWGLSKKRPLALQREAHGLRGEPGLEQPFWISSVAALLNTDLVATGSHSSCVRLWQCGEGFRQLDLLCDIPLVGFINSLKFSSSGDFLVAGVGQEHRLGRWWRIKEARNSVCIIPLRRVPVPPAAGS.

Residues methionine 1 to alanine 75 are disordered. A Nuclear localization signal motif is present at residues arginine 8–lysine 40. Arginine 10 is modified (omega-N-methylarginine). N6-acetyllysine is present on residues lysine 12 and lysine 25. A phosphoserine mark is found at serine 50, serine 51, serine 53, and serine 57. Residues glutamate 65 to threonine 74 show a composition bias toward acidic residues. Lysine 113 is covalently cross-linked (Glycyl lysine isopeptide (Lys-Gly) (interchain with G-Cter in SUMO2)). WD repeat units follow at residues glycine 144–valine 183, glycine 197–threonine 236, glycine 239–threonine 278, glycine 281–phenylalanine 320, glycine 322–leucine 360, glutamate 374–aspartate 413, and proline 419–cysteine 460.

This sequence belongs to the WD repeat RRP9 family. Interacts specifically with the U3 small nucleolar RNA (U3 snoRNA). Binds a sub-fragment of the U3 snoRNA surrounding the B/C motif (3UBC). This association with the U3BC RNA is dependent on the binding of a protein called 15.5K to the box B/C motif. The association of the protein with the U3BC RNA was found to be also dependent on a conserved RNA structure that flanks the box B/C motif. Part of the small subunit (SSU) processome, composed of more than 70 proteins and the RNA chaperone small nucleolar RNA (snoRNA) U3. In terms of processing, acetylation at Lys-12 and Lys-25 by KAT2B/PCAF under stress impairs pre-rRNA processing. Deacetylation by SIRT7 enhances RRP9-binding to U3 snoRNA, which is a prerequisite for pre-rRNA processing.

It is found in the nucleus. The protein resides in the nucleolus. Its function is as follows. Component of a nucleolar small nuclear ribonucleoprotein particle (snoRNP) thought to participate in the processing and modification of pre-ribosomal RNA (pre-rRNA). Part of the small subunit (SSU) processome, first precursor of the small eukaryotic ribosomal subunit. During the assembly of the SSU processome in the nucleolus, many ribosome biogenesis factors, an RNA chaperone and ribosomal proteins associate with the nascent pre-rRNA and work in concert to generate RNA folding, modifications, rearrangements and cleavage as well as targeted degradation of pre-ribosomal RNA by the RNA exosome. This is U3 small nucleolar RNA-interacting protein 2 from Homo sapiens (Human).